The chain runs to 116 residues: MNVLKCLAIISVLGIFFIPRYSESAISCSVVLQDLQPCVSYLTSGSGNPPETCCDGVKSLAAATTTSADKKAACQCIKSVANSVTVKPELAQALASNCGASLPVDASPTVDCTTVG.

Residues 1 to 24 (MNVLKCLAIISVLGIFFIPRYSES) form the signal peptide. Disulfide bonds link cysteine 28–cysteine 76, cysteine 38–cysteine 53, cysteine 54–cysteine 98, and cysteine 74–cysteine 112.

It belongs to the plant LTP family.

In terms of biological role, plant non-specific lipid-transfer proteins transfer phospholipids as well as galactolipids across membranes. May play a role in wax or cutin deposition in the cell walls of expanding epidermal cells and certain secretory tissues. The sequence is that of Non-specific lipid-transfer protein 8 (LTP8) from Arabidopsis thaliana (Mouse-ear cress).